Reading from the N-terminus, the 427-residue chain is Enolase (427 aa).

Residue Q164 participates in (2R)-2-phosphoglycerate binding. The active-site Proton donor is E206. Mg(2+)-binding residues include D243, E284, and D311. (2R)-2-phosphoglycerate is bound by residues K336, R365, S366, and K387. K336 functions as the Proton acceptor in the catalytic mechanism.

It belongs to the enolase family. Requires Mg(2+) as cofactor.

The protein resides in the cytoplasm. It localises to the secreted. Its subcellular location is the cell surface. The catalysed reaction is (2R)-2-phosphoglycerate = phosphoenolpyruvate + H2O. The protein operates within carbohydrate degradation; glycolysis; pyruvate from D-glyceraldehyde 3-phosphate: step 4/5. Its function is as follows. Catalyzes the reversible conversion of 2-phosphoglycerate (2-PG) into phosphoenolpyruvate (PEP). It is essential for the degradation of carbohydrates via glycolysis. This chain is Enolase, found in Synechococcus sp. (strain JA-2-3B'a(2-13)) (Cyanobacteria bacterium Yellowstone B-Prime).